The following is a 213-amino-acid chain: Large ribosomal subunit protein uL3 (213 aa).

It belongs to the universal ribosomal protein uL3 family. Part of the 50S ribosomal subunit. Forms a cluster with proteins L14 and L19.

One of the primary rRNA binding proteins, it binds directly near the 3'-end of the 23S rRNA, where it nucleates assembly of the 50S subunit. This Bifidobacterium adolescentis (strain ATCC 15703 / DSM 20083 / NCTC 11814 / E194a) protein is Large ribosomal subunit protein uL3.